The chain runs to 264 residues: Sulfur carrier protein FdhD (264 aa).

Cys-107 acts as the Cysteine persulfide intermediate in catalysis.

This sequence belongs to the FdhD family.

The protein resides in the cytoplasm. In terms of biological role, required for formate dehydrogenase (FDH) activity. Acts as a sulfur carrier protein that transfers sulfur from IscS to the molybdenum cofactor prior to its insertion into FDH. The protein is Sulfur carrier protein FdhD of Staphylococcus haemolyticus (strain JCSC1435).